Consider the following 288-residue polypeptide: Structure-specific endonuclease subunit SLX1 (288 aa).

Positions P7–T90 constitute a GIY-YIG domain.

The protein belongs to the SLX1 family. Forms a heterodimer with SLX4. Requires a divalent metal cation as cofactor.

It is found in the nucleus. In terms of biological role, catalytic subunit of the SLX1-SLX4 structure-specific endonuclease that resolves DNA secondary structures generated during DNA repair and recombination. Has endonuclease activity towards branched DNA substrates, introducing single-strand cuts in duplex DNA close to junctions with ss-DNA. The polypeptide is Structure-specific endonuclease subunit SLX1 (Yarrowia lipolytica (strain CLIB 122 / E 150) (Yeast)).